The primary structure comprises 340 residues: tRNA N6-adenosine threonylcarbamoyltransferase (340 aa).

Positions 111 and 115 each coordinate Fe cation. Residues 134 to 138 (LVSGG), D167, G180, and N276 contribute to the substrate site. D304 serves as a coordination point for Fe cation.

This sequence belongs to the KAE1 / TsaD family. Fe(2+) serves as cofactor.

It is found in the cytoplasm. It carries out the reaction L-threonylcarbamoyladenylate + adenosine(37) in tRNA = N(6)-L-threonylcarbamoyladenosine(37) in tRNA + AMP + H(+). Its function is as follows. Required for the formation of a threonylcarbamoyl group on adenosine at position 37 (t(6)A37) in tRNAs that read codons beginning with adenine. Is involved in the transfer of the threonylcarbamoyl moiety of threonylcarbamoyl-AMP (TC-AMP) to the N6 group of A37, together with TsaE and TsaB. TsaD likely plays a direct catalytic role in this reaction. The sequence is that of tRNA N6-adenosine threonylcarbamoyltransferase from Helicobacter pylori (strain P12).